The chain runs to 1218 residues: Protein jagged-1 (1218 aa).

The signal sequence occupies residues 1 to 33; that stretch reads MRSPRTRGRPGRPLSLLLALLCALRAKVCGASG. Residues 34–1067 are Extracellular-facing; the sequence is QFELEILSMQ…QRRPLKNRTD (1034 aa). A glycan (N-linked (GlcNAc...) asparagine) is linked at asparagine 143. The region spanning 185-229 is the DSL domain; the sequence is VTCDDHYYGFGCNKFCRPRDDFFGHYACDQNGNKTCMEGWMGPDC. 2 disulfides stabilise this stretch: cysteine 187-cysteine 196 and cysteine 200-cysteine 212. The tract at residues 199 to 207 is important for interaction with NOTCH1; the sequence is FCRPRDDFF. An N-linked (GlcNAc...) asparagine glycan is attached at asparagine 217. 40 disulfide bridges follow: cysteine 220–cysteine 229, cysteine 234–cysteine 245, cysteine 238–cysteine 251, cysteine 253–cysteine 262, cysteine 265–cysteine 276, cysteine 271–cysteine 282, cysteine 284–cysteine 293, cysteine 300–cysteine 312, cysteine 306–cysteine 322, cysteine 324–cysteine 333, cysteine 340–cysteine 351, cysteine 345–cysteine 360, cysteine 362–cysteine 371, cysteine 378–cysteine 389, cysteine 383–cysteine 398, cysteine 400–cysteine 409, cysteine 416–cysteine 427, cysteine 421–cysteine 436, cysteine 438–cysteine 447, cysteine 454–cysteine 464, cysteine 458–cysteine 473, cysteine 475–cysteine 484, cysteine 491–cysteine 502, cysteine 496–cysteine 511, cysteine 513–cysteine 522, cysteine 529–cysteine 540, cysteine 534–cysteine 549, cysteine 551–cysteine 560, cysteine 578–cysteine 605, cysteine 599–cysteine 615, cysteine 617–cysteine 626, cysteine 633–cysteine 644, cysteine 638–cysteine 653, cysteine 655–cysteine 664, cysteine 671–cysteine 682, cysteine 676–cysteine 691, cysteine 693–cysteine 702, cysteine 709–cysteine 720, cysteine 714–cysteine 729, and cysteine 731–cysteine 740. Residues 230 to 263 form the EGF-like 1 domain; sequence NKAICRQGCSPKHGSCKLPGDCRCQYGWQGLYCD. The EGF-like 2; atypical domain maps to 264–294; it reads KCIPHPGCVHGTCNEPWQCLCETNWGGQLCD. 2 EGF-like domains span residues 296–334 and 336–372; these read DLNY…PNCE and AEHA…PTCS. The EGF-like 5; calcium-binding domain maps to 374–410; the sequence is NIDDCSPNNCSHGGTCQDLVNGFKCVCPPQWTGKTCQ. Residue asparagine 382 is glycosylated (N-linked (GlcNAc...) asparagine). The EGF-like 6; calcium-binding domain maps to 412–448; the sequence is DANECEAKPCVNARSCKNLIASYYCDCLPGWMGQNCD. The region spanning 450-485 is the EGF-like 7; calcium-binding domain; it reads NINDCLGQCQNDASCRDLVNGYRCICPPGYAGDHCE. Residues 487–523 form the EGF-like 8; calcium-binding domain; sequence DIDECASNPCLNGGHCQNEINRFQCLCPTGFSGNLCQ. EGF-like domains are found at residues 525–561 and 586–627; these read DIDY…KNCS and DTPE…TYCH. Asparagine 559 carries N-linked (GlcNAc...) asparagine glycosylation. Residues 629–665 form the EGF-like 11; calcium-binding domain; sequence NINDCESNPCKNGGTCIDGVNSYKCICSDGWEGAHCE. The 37-residue stretch at 667 to 703 folds into the EGF-like 12; calcium-binding domain; sequence NINDCSQNPCHYGGTCRDLVNDFYCDCKNGWKGKTCH. EGF-like domains follow at residues 705–741 and 744–780; these read RDSQ…TTCN and RNSS…PICT. N-linked (GlcNAc...) asparagine glycosylation occurs at asparagine 745. 9 cysteine pairs are disulfide-bonded: cysteine 748/cysteine 759, cysteine 753/cysteine 768, cysteine 770/cysteine 779, cysteine 786/cysteine 797, cysteine 791/cysteine 806, cysteine 808/cysteine 817, cysteine 824/cysteine 835, cysteine 829/cysteine 844, and cysteine 846/cysteine 855. The region spanning 782–818 is the EGF-like 15; calcium-binding domain; that stretch reads NTNDCSPHPCYNSGTCVDGDNWYRCECAPGFAGPDCR. Residues 820 to 856 enclose the EGF-like 16; calcium-binding domain; sequence NINECQSSPCAFGATCVDEINGYQCICPPGHSGAKCH. N-linked (GlcNAc...) asparagine glycans are attached at residues asparagine 960, asparagine 991, asparagine 1045, and asparagine 1064. A helical membrane pass occupies residues 1068 to 1093; that stretch reads FLVPLLSSVLTVAWVCCLVTAFYWCV. The Cytoplasmic segment spans residues 1094–1218; it reads RKRRKPSSHT…QSLNRMEYIV (125 aa). The disordered stretch occupies residues 1181–1218; that stretch reads REEKAPSGTPTKHPNWTNKQDNRDLESAQSLNRMEYIV. Residues 1188-1199 are compositionally biased toward polar residues; that stretch reads GTPTKHPNWTNK.

Interacts with NOTCH1, NOTCH2 and NOTCH3. Widely expressed in many tissues, with highest expression in brain, heart, muscle and thymus.

The protein resides in the membrane. It is found in the cell membrane. Functionally, ligand for multiple Notch receptors and involved in the mediation of Notch signaling. May be involved in cell-fate decisions during hematopoiesis. Seems to be involved in early and late stages of mammalian cardiovascular development. Inhibits myoblast differentiation. May regulate fibroblast growth factor-induced angiogenesis. This chain is Protein jagged-1 (Jag1), found in Mus musculus (Mouse).